A 243-amino-acid polypeptide reads, in one-letter code: Hydroxyacylglutathione hydrolase (243 aa).

The Zn(2+) site is built by His59, His61, Asp63, His64, His117, Asp135, and His173.

The protein belongs to the metallo-beta-lactamase superfamily. Glyoxalase II family. As to quaternary structure, monomer. Requires Zn(2+) as cofactor.

It carries out the reaction an S-(2-hydroxyacyl)glutathione + H2O = a 2-hydroxy carboxylate + glutathione + H(+). Its pathway is secondary metabolite metabolism; methylglyoxal degradation; (R)-lactate from methylglyoxal: step 2/2. Functionally, thiolesterase that catalyzes the hydrolysis of S-D-lactoyl-glutathione to form glutathione and D-lactic acid. This chain is Hydroxyacylglutathione hydrolase, found in Acidiphilium cryptum (strain JF-5).